The primary structure comprises 58 residues: Small ribosomal subunit protein bS21B (58 aa).

It belongs to the bacterial ribosomal protein bS21 family.

This Nostoc sp. (strain PCC 7120 / SAG 25.82 / UTEX 2576) protein is Small ribosomal subunit protein bS21B (rpsU2).